Consider the following 258-residue polypeptide: UPF0246 protein Sfri_2896 (258 aa).

The protein belongs to the UPF0246 family.

This Shewanella frigidimarina (strain NCIMB 400) protein is UPF0246 protein Sfri_2896.